The sequence spans 340 residues: Tartrate-resistant acid phosphatase type 5 (340 aa).

The first 20 residues, 1-20 (MDTWTVLLILQASLVLPGAV), serve as a signal peptide directing secretion. Fe cation is bound by residues aspartate 41, aspartate 79, tyrosine 82, and asparagine 118. N-linked (GlcNAc...) asparagine glycans are attached at residues asparagine 124 and asparagine 155. Cysteine 169 and cysteine 227 are oxidised to a cystine. Fe cation-binding residues include histidine 213, histidine 248, and histidine 250.

Fe cation serves as cofactor.

It is found in the secreted. The catalysed reaction is a phosphate monoester + H2O = an alcohol + phosphate. Its function is as follows. Uteroferrin is a phosphoprotein phosphatase, synthesized in response to progesterone. It appears to function in transplacental transport of iron in pig. The sequence is that of Tartrate-resistant acid phosphatase type 5 (ACP5) from Sus scrofa (Pig).